An 83-amino-acid polypeptide reads, in one-letter code: Mu-theraphotoxin-Hhn2j 1 (83 aa).

A signal peptide spans 1–21; that stretch reads MKASMFLALAGLVLLFVVGYA. The propeptide occupies 22-48; the sequence is SESEEKEFPIELLSKIFAVDVFKGEER. Disulfide bonds link Cys-50/Cys-65, Cys-57/Cys-70, and Cys-64/Cys-77. Leucine amide is present on Leu-81.

Belongs to the neurotoxin 10 (Hwtx-1) family. 15 (Hntx-3) subfamily. In terms of assembly, monomer. Expressed by the venom gland.

The protein localises to the secreted. Functionally, lethal neurotoxin. Selectively blocks tetrodotoxin-sensitive voltage-gated sodium channels (Nav). Does not affect tetrodotoxin-resistant voltage-gated sodium channels or calcium channels. The polypeptide is Mu-theraphotoxin-Hhn2j 1 (Cyriopagopus hainanus (Chinese bird spider)).